Here is a 432-residue protein sequence, read N- to C-terminus: MPHSPLISIPHVWCHPEEEERMHDELLQAVSKGPVMFRDVSIDFSQEEWECLDADQMNLYKEVMLENFSNLVSVGLSNSKPAVISLLEQGKEPWMVDRELTRGLCSDLESMCETKILSLKKRHFSQVIITREDMSTFIQPTFLIPPQKTMSEEKPWECKICGKTFNQNSQFIQHQRIHFGEKHYESKEYGKSFSRGSLVTRHQRIHTGKKPYECKECGKAFSCSSYFSQHQRIHTGEKPYECKECGKAFKYCSNLNDHQRIHTGEKPYECKVCGKAFTKSSQLFLHLRIHTGEKPYECKECGKAFTQHSRLIQHQRMHTGEKPYECKQCGKAFNSASTLTNHHRIHAGEKLYECEECRKAFIQSSELIQHQRIHTDEKPYECNECGKAFNKGSNLTRHQRIHTGEKPYDCKECGKAFGSRSDLIRHEGIHTG.

The KRAB domain maps to 35–106 (VMFRDVSIDF…DRELTRGLCS (72 aa)). A C2H2-type 1 zinc finger spans residues 156 to 178 (WECKICGKTFNQNSQFIQHQRIH). The segment at 184 to 206 (YESKEYGKSFSRGSLVTRHQRIH) adopts a C2H2-type 2; degenerate zinc-finger fold. C2H2-type zinc fingers lie at residues 212–234 (YECK…QRIH), 240–262 (YECK…QRIH), 268–290 (YECK…LRIH), 296–318 (YECK…QRMH), 324–346 (YECK…HRIH), 352–374 (YECE…QRIH), 380–402 (YECN…QRIH), and 408–430 (YDCK…EGIH).

Belongs to the krueppel C2H2-type zinc-finger protein family.

It is found in the nucleus. Functionally, may be involved in transcriptional regulation. The chain is Zinc finger protein 829 (ZNF829) from Homo sapiens (Human).